A 233-amino-acid polypeptide reads, in one-letter code: tRNA (guanine-N(7)-)-methyltransferase (233 aa).

Residues 1-22 (MIDENHPMRAAGNFFGRRHGKP) form a disordered region. Residues Glu-64, Glu-89, Asp-116, and Asp-138 each contribute to the S-adenosyl-L-methionine site. Asp-138 is an active-site residue. Residues Lys-142, Asp-174, and 212–215 (TRYE) contribute to the substrate site.

This sequence belongs to the class I-like SAM-binding methyltransferase superfamily. TrmB family.

The enzyme catalyses guanosine(46) in tRNA + S-adenosyl-L-methionine = N(7)-methylguanosine(46) in tRNA + S-adenosyl-L-homocysteine. It participates in tRNA modification; N(7)-methylguanine-tRNA biosynthesis. Its function is as follows. Catalyzes the formation of N(7)-methylguanine at position 46 (m7G46) in tRNA. This Brucella melitensis biotype 1 (strain ATCC 23456 / CCUG 17765 / NCTC 10094 / 16M) protein is tRNA (guanine-N(7)-)-methyltransferase.